The following is a 334-amino-acid chain: Anthranilate phosphoribosyltransferase (334 aa).

Residues Gly-81, 84–85 (GD), Thr-89, 91–94 (NIST), 109–117 (KHGNRSVSS), and Ala-121 contribute to the 5-phospho-alpha-D-ribose 1-diphosphate site. Gly-81 provides a ligand contact to anthranilate. Position 93 (Ser-93) interacts with Mg(2+). Asn-112 contacts anthranilate. Residue Arg-167 participates in anthranilate binding. Residues Asp-225 and Glu-226 each coordinate Mg(2+).

It belongs to the anthranilate phosphoribosyltransferase family. As to quaternary structure, homodimer. Mg(2+) serves as cofactor.

It catalyses the reaction N-(5-phospho-beta-D-ribosyl)anthranilate + diphosphate = 5-phospho-alpha-D-ribose 1-diphosphate + anthranilate. The protein operates within amino-acid biosynthesis; L-tryptophan biosynthesis; L-tryptophan from chorismate: step 2/5. Catalyzes the transfer of the phosphoribosyl group of 5-phosphorylribose-1-pyrophosphate (PRPP) to anthranilate to yield N-(5'-phosphoribosyl)-anthranilate (PRA). This chain is Anthranilate phosphoribosyltransferase, found in Histophilus somni (strain 2336) (Haemophilus somnus).